A 769-amino-acid chain; its full sequence is TSC22 domain family protein 2 (769 aa).

Disordered stretches follow at residues 20 to 86 (AQVA…TVSP), 224 to 292 (HGLD…PQPM), 334 to 353 (AQPGPAGGSSLSQQFAYPQP), and 520 to 563 (VPAP…SLPQ). The span at 28–37 (EDTESLDDPD) shows a compositional bias: acidic residues. The segment covering 229-252 (GTDSSLTAVSQLPPSEKMSQPTLA) has biased composition (polar residues). Positions 269-279 (GGAVAPSSASL) are enriched in low complexity. The span at 531-541 (SSHTPVSRSSS) shows a compositional bias: low complexity. The segment covering 542-563 (VIQQVGSPLAQGTHSAPTSLPQ) has biased composition (polar residues). A coiled-coil region spans residues 691–725 (MYAVREEVEVLKEQIKELVERNSLLERENALLKSL). The segment covering 726–745 (SNNDQLSQLPAQQANPGSTS) has biased composition (polar residues). Residues 726 to 769 (SNNDQLSQLPAQQANPGSTSQQQAMIAQPPQPTQPPQQPNVSSA) form a disordered region. The span at 754-763 (PPQPTQPPQQ) shows a compositional bias: pro residues.

The protein belongs to the TSC-22/Dip/Bun family. Interacts with NRBP1. Interacts with PKM isoform M2; the interaction results in reduced nuclear levels of PKM isoform M2, leading to repression of cyclin CCND1 transcription and reduced cell growth. Interacts with WDR77. Expressed in the cortex, medulla and papilla of the kidney. In terms of tissue distribution, expressed in the kidney.

Functionally, reduces the level of nuclear PKM isoform M2 which results in repression of cyclin CCND1 transcription and reduced cell growth. In terms of biological role, may protect kidney cells from hyperosmotic stress. The chain is TSC22 domain family protein 2 from Mus musculus (Mouse).